The primary structure comprises 905 residues: Toll-like receptor 3 (905 aa).

The signal sequence occupies residues 1-25 (MKGCSSYLMYSFGGLLSLWILLVSS). In terms of domain architecture, LRRNT spans 26–52 (TNQCTVRYNVADCSHLKLTHIPDDLPS). Topologically, residues 26-705 (TNQCTVRYNV…SCKDSAPFEL (680 aa)) are lumenal. The cysteines at positions 29 and 38 are disulfide-linked. Asn53, Asn58, and Asn71 each carry an N-linked (GlcNAc...) asparagine glycan. LRR repeat units follow at residues 53–74 (NITVLNLTHNQLRRLPPTNFTR), 77–98 (QLAILDAGFNSISKLEPELCQI), 101–122 (LLKVLNLQHNELSQISDQTFVF), 125–146 (NLTELDLMSNSIHKIKSNPFKN), 149–170 (NLIKLDLSHNGLSSTKLGTGVQ), and 173–196 (NLQELLLAKNKILALRSEELEFLG). An intrachain disulfide couples Cys96 to Cys123. N-linked (GlcNAc...) asparagine glycosylation occurs at Asn125. A glycan (N-linked (GlcNAc...) asparagine) is linked at Asn197. An LRR 7 repeat occupies 199 to 220 (SLRKLDLSSNPLKEFSPGCFQT). Asn248, Asn253, Asn276, and Asn292 each carry an N-linked (GlcNAc...) asparagine glycan. 15 LRR repeats span residues 250 to 271 (SIQNLSLANNQLLATSESTFSG), 276 to 297 (NLTQLDLSYNNLHDVGNGSFSY), 300 to 321 (SLRYLSLEYNNIQRLSPRSFYG), 324 to 345 (NLRYLSLKRAFTKQSVSLASHP), 357 to 378 (YLEYLNMDDNNIPSTKSNTFTG), 381 to 401 (SLKYLSLSKTFTSLQTLTNET), 409 to 430 (PLLTLNLTKNHISKIANGTFSW), 433 to 454 (QLRILDLGLNEIEQKLSGQEWR), 458 to 479 (NIFEIYLSYNKYLQLSTSSFAL), 482 to 502 (SLQRLMLRRVALKNVDISPSP), 508 to 529 (NLTILDLSNNNIANINEDLLEG), 532 to 553 (NLEILDFQHNNLARLWKRANPG), 564 to 585 (HLHILNLESNGLDEIPVGVFKN), 588 to 609 (ELKSINLGLNNLNKLEPFIFDD), and 612 to 633 (SLRSLNLQKNLITSVEKDVFGP). Residues Asn399, Asn414, and Asn425 are each glycosylated (N-linked (GlcNAc...) asparagine). Asn508 is a glycosylation site (N-linked (GlcNAc...) asparagine). The 54-residue stretch at 646–699 (NPFDCTCESISWFVNWINQTHTNISELSTHYLCNTPHHYYGFPLKLFDTSSCKD) folds into the LRRCT domain. Cystine bridges form between Cys650–Cys678 and Cys652–Cys697. Residues Asn663 and Asn668 are each glycosylated (N-linked (GlcNAc...) asparagine). The helical transmembrane segment at 706-726 (LFIISTSMLLVFILVVLLIHI) threads the bilayer. Topologically, residues 727–905 (EGWRISFYWN…VALGSRNSAH (179 aa)) are cytoplasmic. Residues 755–898 (FEYTAYIIHA…AFHHKLQVAL (144 aa)) form the TIR domain. Tyr760 is modified (phosphotyrosine). Residues Lys766, Lys813, and Lys832 each participate in a glycyl lysine isopeptide (Lys-Gly) (interchain with G-Cter in ubiquitin) cross-link. Tyr859 carries the phosphotyrosine modification.

Belongs to the Toll-like receptor family. In terms of assembly, monomer and homodimer; dimerization is triggered by ligand-binding, the signaling unit is composed of one ds-RNA of around 40 bp and two TLR3 molecules, and lateral clustering of signaling units along the length of the ds-RNA ligand is required for TLR3 signal transduction. Interacts (via transmembrane domain) with UNC93B1; the interaction is required for transport from the ER to the endosomes. Interacts with SRC; upon binding of double-stranded RNA. Interacts with TICAM1 (via the TIR domain) in response to poly(I:C) and this interaction is enhanced in the presence of WDFY1. The tyrosine-phosphorylated form (via TIR domain) interacts with WDFY1 (via WD repeat 2) in response to poly(I:C). Ubiquitinated by RNF170 at Lys-766 via 'Lys-48'-linked ubiquitin chains; leading to TLR3 proteasomal degradation. Post-translationally, TLR3 signaling requires a proteolytic cleavage mediated by cathepsins CTSB and CTSH, the cleavage occurs between amino acids 252 and 346. The cleaved form of TLR3 is the predominant form found in endosomes. Ubiquitinated by TRIM3; leading to recognition and sorting of polyubiquitinated TLR3 by the ESCRT complexes. Ubiquitinated by ZNRF1 via 'Lys-63'-linked ubiquitin chains; leading to TLR3 lysosomal trafficking and degradation. Highly expressed in lung. After intraperitoneal injection of lipopolysaccharide, highly expressed in brain, heart, kidney, liver, lung and spleen.

The protein resides in the endoplasmic reticulum membrane. It localises to the endosome membrane. The protein localises to the early endosome. Functionally, key component of innate and adaptive immunity. TLRs (Toll-like receptors) control host immune response against pathogens through recognition of molecular patterns specific to microorganisms. TLR3 is a nucleotide-sensing TLR which is activated by double-stranded RNA, a sign of viral infection. Acts via the adapter TRIF/TICAM1, leading to NF-kappa-B activation, IRF3 nuclear translocation, cytokine secretion and the inflammatory response. This is Toll-like receptor 3 from Mus musculus (Mouse).